The following is a 335-amino-acid chain: (+)-caryolan-1-ol synthase (335 aa).

Residues Asp83, Asp87, Asn220, Ser224, and Glu228 each coordinate Mg(2+). The short motif at 83–87 is the DDXXD motif element; the sequence is DDEFD. The NSE/DTE motif motif lies at 220–228; the sequence is NDICSFEKE.

It belongs to the terpene synthase family. Mg(2+) serves as cofactor. It depends on Mn(2+) as a cofactor.

The catalysed reaction is (2E,6E)-farnesyl diphosphate = (+)-(E)-beta-caryophyllene + diphosphate. It carries out the reaction (+)-(E)-beta-caryophyllene + H2O = (+)-caryolan-1-ol. It participates in secondary metabolite biosynthesis; terpenoid biosynthesis. Sesquiterpene cyclase that first catalyzes the cyclization of farnesyl diphosphate (FPP) to the bicyclic sesquiterpene (+)-beta-caryophyllene intermediate, and then its conversion to (+)-caryolan-1-ol via a second cyclization and the addition of a water molecule. In Streptomyces griseus subsp. griseus (strain JCM 4626 / CBS 651.72 / NBRC 13350 / KCC S-0626 / ISP 5235), this protein is (+)-caryolan-1-ol synthase (gcoA).